Reading from the N-terminus, the 280-residue chain is MRFTKMHGLGNDYIYVNCFEETVENPSEVAKKVSDRHFGIGSDGLVLIMPSERADFKMRMFNSDGSEAEMCGNAIRCVGKYVFDRGMTNKNVIRVETLAGIKVLELTVQDGKAKLVKVDMGEPILKPENIPVNSDKEIFRTEPVEIDGKEFKVTCVSMGNPHAVSYVKNVDIFPLEKIGPKMEHHPLFPKRINAEFVEVIDRTTLKMRVWERGAGETLACGTGACAVLVASVLNGVSERKATVKLLGGDLIIEWNENNNHVYMTGPAVKVFEGEVDLNEL.

Substrate is bound by residues Asn11 and Asn62. Cys71 (proton donor) is an active-site residue. Residues Gly72–Asn73, Asn160, Asn193, and Glu211–Arg212 contribute to the substrate site. The active-site Proton acceptor is the Cys220. Gly221–Thr222 is a substrate binding site.

It belongs to the diaminopimelate epimerase family. In terms of assembly, homodimer.

Its subcellular location is the cytoplasm. It catalyses the reaction (2S,6S)-2,6-diaminopimelate = meso-2,6-diaminopimelate. Its pathway is amino-acid biosynthesis; L-lysine biosynthesis via DAP pathway; DL-2,6-diaminopimelate from LL-2,6-diaminopimelate: step 1/1. Its function is as follows. Catalyzes the stereoinversion of LL-2,6-diaminopimelate (L,L-DAP) to meso-diaminopimelate (meso-DAP), a precursor of L-lysine and an essential component of the bacterial peptidoglycan. The polypeptide is Diaminopimelate epimerase (Acetivibrio thermocellus (strain ATCC 27405 / DSM 1237 / JCM 9322 / NBRC 103400 / NCIMB 10682 / NRRL B-4536 / VPI 7372) (Clostridium thermocellum)).